A 118-amino-acid chain; its full sequence is Large ribosomal subunit protein uL18 (118 aa).

Belongs to the universal ribosomal protein uL18 family. In terms of assembly, part of the 50S ribosomal subunit; part of the 5S rRNA/L5/L18/L25 subcomplex. Contacts the 5S and 23S rRNAs.

In terms of biological role, this is one of the proteins that bind and probably mediate the attachment of the 5S RNA into the large ribosomal subunit, where it forms part of the central protuberance. The polypeptide is Large ribosomal subunit protein uL18 (Limosilactobacillus reuteri (strain DSM 20016) (Lactobacillus reuteri)).